The sequence spans 347 residues: S-adenosylmethionine:tRNA ribosyltransferase-isomerase (347 aa).

This sequence belongs to the QueA family. Monomer.

The protein localises to the cytoplasm. It carries out the reaction 7-aminomethyl-7-carbaguanosine(34) in tRNA + S-adenosyl-L-methionine = epoxyqueuosine(34) in tRNA + adenine + L-methionine + 2 H(+). It participates in tRNA modification; tRNA-queuosine biosynthesis. Its function is as follows. Transfers and isomerizes the ribose moiety from AdoMet to the 7-aminomethyl group of 7-deazaguanine (preQ1-tRNA) to give epoxyqueuosine (oQ-tRNA). The protein is S-adenosylmethionine:tRNA ribosyltransferase-isomerase of Bordetella parapertussis (strain 12822 / ATCC BAA-587 / NCTC 13253).